A 1213-amino-acid polypeptide reads, in one-letter code: MSNFRDSSSPRRGYSEFDPESGEGLGRKKSLIRPERSRMDESHPRFHYTQVANQESNHIKVQPSSTGVDPRKSNELSTSRSHLSNYATPPHQEEEEDEGIPLMDIHNASPNVSSDQNNDLKGGREVYGLNDEINDYGSSPKKNQVISSSRPMNNEKPAKPKHDIYFWKVYCYAITFWAPAPLLKLFGLPTKDRQFAWREKIGLISCILYVGAFVAYLTFGFTKTVCSSQVVRTQINHVNGGYLIINGRAYDLTSSQHPKAAGIQAGSNVLYPPMNAGGKDASFLFQNVNGNCKGLIKPRDNCSIPYDGDELAWYMPCRLFNQDGSTKPNNTFAYYKGWACHTSETARDAYYKLKVNGDVYFTWDDVKNSSRNLVVYSGNVLDLDLINWIETDDVTYPELFDKLRDDETYRGLDISLVLTNSEERQAARCLTEIIKVGSIDTDTIGCIASKVVLYMSLVFILSVVVVKFIMACWFKWVTSRKQGATMYDSKAWAKRNREIEDWVDHDHGIGAEVKTVPVKARANYKAAKTNRQSVFHRAQKLSLGPNADLSQYYDNPNALSKTFKYTTMSTQAALLGRNGYGKRGNNANKSVSGGFNGRQSNLYLTDQGSSTDLLNRPVSSYNPFDSMGDDSIVINGLSPDIIHPDVVPQPPVEYQPFGYPLAHTINLVTCYSEDEEGIRITLDSIATTDYPNSHKLILVICDGIIKGSGNDETTPDIVLDMMSDLTVPRDEVEAYSYVAVAQGSKRHNMAKVYAGFYKYNDETVPPEKQQRIPMITIVKCGTPEEASAPKPGNRGKRDSQIILMSFLQKVVFDERMTSLEYEMLQSIWRITGLMAEFYEIVLMVDADTKVFPDSLTHMVAEMVKDPTIMGLCGETKISNKAQTWVTAIQVFEYYISHHQAKAFESIFGGVTCLPGCFCMYRIKAPKGSDGYWVPILANPDIVERYSDNVVDTLHRKNLLLLGEDRYLSSLMLRTFPTRKQVFVPKAACKTVVPDKFKVLLSQRRRWINSTVHNLFELVLVKDLCGTFCFSMQFVIFIELIGTLVLPAAITFTIYVIIVAIVSKPTPVMSLVLLAVIFGLPGCLIVITVSSLSYLVYFVIYLFALPIWNFVLPSYAYWKFDDFSWGETRTVAGGDKGDHSAVEGKFDSSKIAMKRWREWERERRSTENRKQQQQQQLTNNSSNNLAVPGAAWDPSNTGGNLIDDLSQGSSSGSS.

The interval methionine 1–aspartate 97 is disordered. The Cytoplasmic segment spans residues methionine 1–lysine 168. Residues isoleucine 32 to proline 44 show a composition bias toward basic and acidic residues. Residues glutamate 75 to alanine 87 show a composition bias toward polar residues. A helical membrane pass occupies residues valine 169–proline 189. Topologically, residues threonine 190–lysine 200 are extracellular. A helical transmembrane segment spans residues isoleucine 201–phenylalanine 221. The Cytoplasmic portion of the chain corresponds to threonine 222–lysine 450. A helical membrane pass occupies residues valine 451 to alanine 471. The Extracellular portion of the chain corresponds to cysteine 472 to glutamate 1016. Residues asparagine 588 and asparagine 1008 are each glycosylated (N-linked (GlcNAc...) asparagine). A helical transmembrane segment spans residues leucine 1017–isoleucine 1037. At glutamate 1038 to leucine 1039 the chain is on the cytoplasmic side. Residues isoleucine 1040–isoleucine 1060 form a helical membrane-spanning segment. Over valine 1061–threonine 1065 the chain is Extracellular. A helical transmembrane segment spans residues proline 1066 to isoleucine 1086. The Cytoplasmic portion of the chain corresponds to threonine 1087–serine 1213. The tract at residues glutamate 1161 to serine 1213 is disordered.

It belongs to the chitin synthase family. Class IV subfamily.

It is found in the cell membrane. It catalyses the reaction [(1-&gt;4)-N-acetyl-beta-D-glucosaminyl](n) + UDP-N-acetyl-alpha-D-glucosamine = [(1-&gt;4)-N-acetyl-beta-D-glucosaminyl](n+1) + UDP + H(+). Functionally, polymerizes chitin, a structural polymer of the cell wall and septum, by transferring the sugar moiety of UDP-GlcNAc to the non-reducing end of the growing chitin polymer. This is Chitin synthase 3 (CHS3) from Candida albicans (Yeast).